Here is a 452-residue protein sequence, read N- to C-terminus: uncharacterized protein (452 aa).

The protein belongs to the HypE family.

This is an uncharacterized protein from Methanocaldococcus jannaschii (strain ATCC 43067 / DSM 2661 / JAL-1 / JCM 10045 / NBRC 100440) (Methanococcus jannaschii).